Reading from the N-terminus, the 120-residue chain is Ribosome-binding factor A (120 aa).

Belongs to the RbfA family. Monomer. Binds 30S ribosomal subunits, but not 50S ribosomal subunits or 70S ribosomes.

Its subcellular location is the cytoplasm. In terms of biological role, one of several proteins that assist in the late maturation steps of the functional core of the 30S ribosomal subunit. Associates with free 30S ribosomal subunits (but not with 30S subunits that are part of 70S ribosomes or polysomes). Required for efficient processing of 16S rRNA. May interact with the 5'-terminal helix region of 16S rRNA. The chain is Ribosome-binding factor A from Rickettsia peacockii (strain Rustic).